A 225-amino-acid polypeptide reads, in one-letter code: 2-C-methyl-D-erythritol 4-phosphate cytidylyltransferase (225 aa).

It belongs to the IspD/TarI cytidylyltransferase family. IspD subfamily.

The enzyme catalyses 2-C-methyl-D-erythritol 4-phosphate + CTP + H(+) = 4-CDP-2-C-methyl-D-erythritol + diphosphate. It functions in the pathway isoprenoid biosynthesis; isopentenyl diphosphate biosynthesis via DXP pathway; isopentenyl diphosphate from 1-deoxy-D-xylulose 5-phosphate: step 2/6. Catalyzes the formation of 4-diphosphocytidyl-2-C-methyl-D-erythritol from CTP and 2-C-methyl-D-erythritol 4-phosphate (MEP). This chain is 2-C-methyl-D-erythritol 4-phosphate cytidylyltransferase, found in Cereibacter sphaeroides (strain ATCC 17029 / ATH 2.4.9) (Rhodobacter sphaeroides).